Consider the following 619-residue polypeptide: Chaperone protein HscA homolog (619 aa).

It belongs to the heat shock protein 70 family.

Its function is as follows. Chaperone involved in the maturation of iron-sulfur cluster-containing proteins. Has a low intrinsic ATPase activity which is markedly stimulated by HscB. The polypeptide is Chaperone protein HscA homolog (Acinetobacter baumannii (strain AB0057)).